The primary structure comprises 738 residues: Elongation factor G, mitochondrial (738 aa).

Residues 1-20 (MCIGPAPTPETEEELPPSPQ) are disordered. The 289-residue stretch at 32–320 (RFQRNIGVSA…GVCAYLPNPA (289 aa)) folds into the tr-type G domain. Residues 41 to 48 (AHIDSGKT), 118 to 122 (DTPGH), and 172 to 175 (NKMD) contribute to the GTP site.

It belongs to the TRAFAC class translation factor GTPase superfamily. Classic translation factor GTPase family. EF-G/EF-2 subfamily.

It localises to the mitochondrion. It functions in the pathway protein biosynthesis; polypeptide chain elongation. Its function is as follows. Mitochondrial GTPase that catalyzes the GTP-dependent ribosomal translocation step during translation elongation. During this step, the ribosome changes from the pre-translocational (PRE) to the post-translocational (POST) state as the newly formed A-site-bound peptidyl-tRNA and P-site-bound deacylated tRNA move to the P and E sites, respectively. Catalyzes the coordinated movement of the two tRNA molecules, the mRNA and conformational changes in the ribosome. In Laccaria bicolor (strain S238N-H82 / ATCC MYA-4686) (Bicoloured deceiver), this protein is Elongation factor G, mitochondrial.